The primary structure comprises 286 residues: Aminoglycoside N(3)-acetyltransferase III (286 aa).

It belongs to the antibiotic N-acetyltransferase family.

The catalysed reaction is a 2-deoxystreptamine antibiotic + acetyl-CoA = an N(3)-acetyl-2-deoxystreptamine antibiotic + CoA + H(+). In terms of biological role, resistance to antibiotics containing the 2-deoxy-streptamine ring including gentamicin, kanamycin, tobramycin, neomycin and apramycin. This is Aminoglycoside N(3)-acetyltransferase III (aacC2) from Acinetobacter baumannii.